A 126-amino-acid polypeptide reads, in one-letter code: MIFGTGIDIVDITRFERFLEERNTRLFERLFTIHEQEYCAGKAHSAQHYALRFAAKEAFLKACGLGLREGLTWHDVEVVNDSLGKPDLRLYGKAQQLFADMNLSKTFVSLSHDGNFAVAMVVLERV.

Mg(2+)-binding residues include D8 and E57.

Belongs to the P-Pant transferase superfamily. AcpS family. The cofactor is Mg(2+).

It localises to the cytoplasm. It catalyses the reaction apo-[ACP] + CoA = holo-[ACP] + adenosine 3',5'-bisphosphate + H(+). Transfers the 4'-phosphopantetheine moiety from coenzyme A to a Ser of acyl-carrier-protein. This is Holo-[acyl-carrier-protein] synthase from Geobacter metallireducens (strain ATCC 53774 / DSM 7210 / GS-15).